A 443-amino-acid polypeptide reads, in one-letter code: Tubulin beta chain (443 aa).

GTP is bound by residues Gln-11, Glu-69, Ser-138, Gly-142, Thr-143, Gly-144, Asn-204, and Asn-226. Position 69 (Glu-69) interacts with Mg(2+). A disordered region spans residues 424-443 (QYQDATAEEEGEFEEEEGEN). Residues 429-443 (TAEEEGEFEEEEGEN) are compositionally biased toward acidic residues.

This sequence belongs to the tubulin family. Dimer of alpha and beta chains. A typical microtubule is a hollow water-filled tube with an outer diameter of 25 nm and an inner diameter of 15 nM. Alpha-beta heterodimers associate head-to-tail to form protofilaments running lengthwise along the microtubule wall with the beta-tubulin subunit facing the microtubule plus end conferring a structural polarity. Microtubules usually have 13 protofilaments but different protofilament numbers can be found in some organisms and specialized cells. Mg(2+) is required as a cofactor.

It localises to the cytoplasm. The protein localises to the cytoskeleton. In terms of biological role, tubulin is the major constituent of microtubules, a cylinder consisting of laterally associated linear protofilaments composed of alpha- and beta-tubulin heterodimers. Microtubules grow by the addition of GTP-tubulin dimers to the microtubule end, where a stabilizing cap forms. Below the cap, tubulin dimers are in GDP-bound state, owing to GTPase activity of alpha-tubulin. The sequence is that of Tubulin beta chain (BETA-TT1) from Tetrahymena pyriformis.